Consider the following 920-residue polypeptide: Isoleucine--tRNA ligase (920 aa).

Residues 58–68 (PYANGHLHLGH) carry the 'HIGH' region motif. Position 569 (glutamate 569) interacts with L-isoleucyl-5'-AMP. The short motif at 610–614 (KMSKS) is the 'KMSKS' region element. Position 613 (lysine 613) interacts with ATP. Cysteine 895, cysteine 898, cysteine 910, and cysteine 913 together coordinate Zn(2+).

Belongs to the class-I aminoacyl-tRNA synthetase family. IleS type 1 subfamily. Monomer. Zn(2+) serves as cofactor.

The protein localises to the cytoplasm. The catalysed reaction is tRNA(Ile) + L-isoleucine + ATP = L-isoleucyl-tRNA(Ile) + AMP + diphosphate. Catalyzes the attachment of isoleucine to tRNA(Ile). As IleRS can inadvertently accommodate and process structurally similar amino acids such as valine, to avoid such errors it has two additional distinct tRNA(Ile)-dependent editing activities. One activity is designated as 'pretransfer' editing and involves the hydrolysis of activated Val-AMP. The other activity is designated 'posttransfer' editing and involves deacylation of mischarged Val-tRNA(Ile). In Helicobacter pylori (strain ATCC 700392 / 26695) (Campylobacter pylori), this protein is Isoleucine--tRNA ligase.